Reading from the N-terminus, the 368-residue chain is MSILEKVQPIETMLPERYYTMSTEDMEKRVREIKEKMGETLFIPGHHYQKDEVVQFSDAAGDSLQLAQVAASNKEAKYIVFCGVHFMAETADMLTTDEQVVILPDMRAGCSMADMADIEQTERAWKELTKLFGDTMIPLTYVNSTAAIKAFCGRNGGATVTSSNAKQMVSWAFTQKERLVFLPDQHLGRNTAYDLGIPLDKMAVWDPHTDSLEYDGDIEEIQVILWKGHCSVHQNFTVKNIENVRKNHPDMNIIVHPECCYEVVAASDYAGSTKYIIDMIESAPSGSKWAIGTEMNLVNRIIQQHPDKEIVSLNPFMCPCLTMNRIDLPHLLWALETIERGEEINVISVDKQVTEEAVLALNRMLERV.

Positions 46 and 63 each coordinate iminosuccinate. Cys-110 is a [4Fe-4S] cluster binding site. Iminosuccinate contacts are provided by residues 141-143 (YVN) and Ser-162. Cys-230 is a [4Fe-4S] cluster binding site. Residues 256-258 (HPE) and Thr-273 contribute to the iminosuccinate site. Cys-320 lines the [4Fe-4S] cluster pocket.

Belongs to the quinolinate synthase family. Type 3 subfamily. Requires [4Fe-4S] cluster as cofactor.

The protein localises to the cytoplasm. It catalyses the reaction iminosuccinate + dihydroxyacetone phosphate = quinolinate + phosphate + 2 H2O + H(+). It functions in the pathway cofactor biosynthesis; NAD(+) biosynthesis; quinolinate from iminoaspartate: step 1/1. In terms of biological role, catalyzes the condensation of iminoaspartate with dihydroxyacetone phosphate to form quinolinate. The polypeptide is Quinolinate synthase (Bacillus thuringiensis subsp. konkukian (strain 97-27)).